Consider the following 192-residue polypeptide: uncharacterized protein (192 aa).

The disordered stretch occupies residues 71-100 (NNVLPEPSKPNNPVVNPPVSPIQPKTDPEQ). A compositionally biased stretch (pro residues) spans 77-91 (PSKPNNPVVNPPVSP).

This is an uncharacterized protein from Caenorhabditis elegans.